We begin with the raw amino-acid sequence, 86 residues long: uncharacterized protein (86 aa).

A helical membrane pass occupies residues 12-32 (IIFIFAIIIIVVLCVITYLYL).

The protein localises to the membrane. This is an uncharacterized protein from Escherichia coli (strain K12).